The sequence spans 100 residues: Putative pterin-4-alpha-carbinolamine dehydratase (100 aa).

This sequence belongs to the pterin-4-alpha-carbinolamine dehydratase family.

The enzyme catalyses (4aS,6R)-4a-hydroxy-L-erythro-5,6,7,8-tetrahydrobiopterin = (6R)-L-erythro-6,7-dihydrobiopterin + H2O. This chain is Putative pterin-4-alpha-carbinolamine dehydratase, found in Rhodopseudomonas palustris (strain ATCC BAA-98 / CGA009).